The chain runs to 711 residues: Forkhead box protein P1 (711 aa).

Polar residues predominate over residues 1–19 (MMQESGSEAKSNGSTIQNG). The tract at residues 1–41 (MMQESGSEAKSNGSTIQNGSSGGNHLLECGTLRDTRSNGEA) is disordered. The residue at position 115 (S115) is a Phosphoserine. 2 disordered regions span residues 273–292 (HTAE…TSTC) and 305–332 (MNPH…EHPH). Positions 305 to 317 (MNPHASTNGQLSV) are enriched in polar residues. A compositionally biased stretch (basic and acidic residues) spans 320-332 (PKRESLSHEEHPH). Residue K321 forms a Glycyl lysine isopeptide (Lys-Gly) (interchain with G-Cter in SUMO2) linkage. The C2H2-type zinc finger occupies 340 to 365 (GVCKWPGCEAVCDDFPAFLKHLNSEH). A leucine-zipper region spans residues 382 to 403 (VQQLELQLAKDKERLQAMMTHL). Residues K406 and K411 each participate in a glycyl lysine isopeptide (Lys-Gly) (interchain with G-Cter in SUMO2) cross-link. A CTBP1-binding region spans residues 416–420 (PLNLV). The segment covering 424–437 (TLSKSASEASPQSL) has biased composition (polar residues). The segment at 424 to 456 (TLSKSASEASPQSLPHTPTTPTAPLTPVTQGPS) is disordered. The segment covering 438–452 (PHTPTTPTAPLTPVT) has biased composition (low complexity). K476 participates in a covalent cross-link: Glycyl lysine isopeptide (Lys-Gly) (interchain with G-Cter in SUMO2). A DNA-binding region (fork-head) is located at residues 499-589 (RPPFTYASLI…PQKISGNPSL (91 aa)). A disordered region spans residues 645–711 (EHTNSNESDS…EDEPVNEDME (67 aa)). Over residues 646 to 657 (HTNSNESDSSPG) the composition is skewed to polar residues. Phosphothreonine is present on T687. Position 692 is a phosphoserine (S692). Positions 701–711 (YEDEPVNEDME) are enriched in acidic residues.

In terms of assembly, forms homodimers and heterodimers with FOXP2 and FOXP4. Dimerization is required for DNA-binding. Self-associates. Interacts with CTBP1. Interacts with NCOR2 and AR. Interacts with FOXP2. Interacts with TBR1. Interacts with AURKA; this interaction facilitates the phosphorylation of FOXP1, which suppresses the expression of FBXL7. Interacts with ZMYM2.

It is found in the nucleus. Transcriptional repressor. Can act with CTBP1 to synergistically repress transcription but CTPBP1 is not essential. Plays an important role in the specification and differentiation of lung epithelium. Acts cooperatively with FOXP4 to regulate lung secretory epithelial cell fate and regeneration by restricting the goblet cell lineage program; the function may involve regulation of AGR2. Essential transcriptional regulator of B-cell development. Involved in regulation of cardiac muscle cell proliferation. Involved in the columnar organization of spinal motor neurons. Promotes the formation of the lateral motor neuron column (LMC) and the preganglionic motor column (PGC) and is required for respective appropriate motor axon projections. The segment-appropriate generation of spinal cord motor columns requires cooperation with other Hox proteins. Can regulate PITX3 promoter activity; may promote midbrain identity in embryonic stem cell-derived dopamine neurons by regulating PITX3. Negatively regulates the differentiation of T follicular helper cells T(FH)s. Involved in maintenance of hair follicle stem cell quiescence; the function probably involves regulation of FGF18. Represses transcription of various pro-apoptotic genes and cooperates with NF-kappa B-signaling in promoting B-cell expansion by inhibition of caspase-dependent apoptosis. Binds to CSF1R promoter elements and is involved in regulation of monocyte differentiation and macrophage functions; repression of CSF1R in monocytes seems to involve NCOR2 as corepressor. Involved in endothelial cell proliferation, tube formation and migration indicative for a role in angiogenesis; the role in neovascularization seems to implicate suppression of SEMA5B. Can negatively regulate androgen receptor signaling. Acts as a transcriptional activator of the FBXL7 promoter; this activity is regulated by AURKA. This is Forkhead box protein P1 (Foxp1) from Rattus norvegicus (Rat).